The primary structure comprises 303 residues: Target of rapamycin complex subunit LST8 (303 aa).

WD repeat units follow at residues Met1–Thr27, His30–Val68, Gly73–Asn112, Lys114–Gln153, Glu157–His196, Ala205–Thr244, and Gly248–Gln287.

Belongs to the WD repeat LST8 family. As to quaternary structure, the target of rapamycin complex 1 (TORC1) is composed of at least KOG1, LST8, TCO89 and either TOR1 (TORC1-A) or TOR2 (TORC1-B). TORC1 binds to and is inhibited by FKBP-rapamycin. Interacts with PIB2; following activation of PIB2 by glutamine or cysteine and as part of the TORC1 complex. The target of rapamycin complex 2 (TORC2) is composed of at least AVO1, AVO2, BIT61, LST8, TOR2 and TSC11. TORC2 forms a homodimer. Contrary to TORC1, TORC2 does not bind to and is not sensitive to FKBP-rapamycin. LST8 binds to the C-terminal kinase domain in TOR2.

It is found in the cell membrane. It localises to the vacuole membrane. In terms of biological role, essential component of both TORC1 and TORC2. TORC1 regulates multiple cellular processes to control cell growth in response to environmental signals. Nutrient limitation and environmental stress signals cause inactivation of TORC1. Active TORC1 positively controls ribosome biogenesis via control of rRNA, ribosomal protein and tRNA gene expression, and rRNA processing. TORC1 positively controls protein biosynthesis by regulation of mRNA stability, translation initiation factor activity, and high-affinity amino acid permeases that serve to provide amino acids for use by the translation machinery. TORC1 also promotes growth by sequestering a number of nutrient and general stress-responsive transcription factors in the cytoplasm. TORC1 negatively controls macroautophagy, a process to recycle surplus cytoplasmic mass under nutrient starvation conditions. LST8 is involved in the negative regulation of transcription factors GLN3 and RTG1-RTG3, limiting the synthesis of alpha-ketoglutarate, glutamate and glutamine. LST8 is required for targeting of amino acid permeases (AAPs) to the plasma membrane. TORC2 regulates cell cycle-dependent polarization of the actin-cytoskeleton, cell wall integrity, and receptor endocytosis. TORC2 controls polarity of the actin cytoskeleton, which is required for orienting the secretory pathway toward discrete growth sites, via the RHO1/PKC1/MAPK cell integrity pathway. LST8 is involved in maintenance of cell wall integrity. LST8 modulates TOR2 kinase activity. This Saccharomyces cerevisiae (strain ATCC 204508 / S288c) (Baker's yeast) protein is Target of rapamycin complex subunit LST8.